A 283-amino-acid chain; its full sequence is Bifunctional protein FolD (283 aa).

NADP(+)-binding positions include glycine 165–serine 167, serine 190, and isoleucine 231.

This sequence belongs to the tetrahydrofolate dehydrogenase/cyclohydrolase family. As to quaternary structure, homodimer.

It catalyses the reaction (6R)-5,10-methylene-5,6,7,8-tetrahydrofolate + NADP(+) = (6R)-5,10-methenyltetrahydrofolate + NADPH. It carries out the reaction (6R)-5,10-methenyltetrahydrofolate + H2O = (6R)-10-formyltetrahydrofolate + H(+). It participates in one-carbon metabolism; tetrahydrofolate interconversion. In terms of biological role, catalyzes the oxidation of 5,10-methylenetetrahydrofolate to 5,10-methenyltetrahydrofolate and then the hydrolysis of 5,10-methenyltetrahydrofolate to 10-formyltetrahydrofolate. This chain is Bifunctional protein FolD, found in Herminiimonas arsenicoxydans.